Reading from the N-terminus, the 210-residue chain is Thymidylate kinase (210 aa).

10 to 17 (GGEGAGKS) is an ATP binding site.

This sequence belongs to the thymidylate kinase family.

It catalyses the reaction dTMP + ATP = dTDP + ADP. Its function is as follows. Phosphorylation of dTMP to form dTDP in both de novo and salvage pathways of dTTP synthesis. The polypeptide is Thymidylate kinase (Magnetococcus marinus (strain ATCC BAA-1437 / JCM 17883 / MC-1)).